Reading from the N-terminus, the 451-residue chain is Chromosomal replication initiator protein DnaA (451 aa).

Residues Met1–Glu93 are domain I, interacts with DnaA modulators. The disordered stretch occupies residues Glu88–Ser108. Residues Gln94 to Thr113 form a domain II region. The segment at Met114 to Ser330 is domain III, AAA+ region. ATP-binding residues include Gly158, Gly160, Lys161, and Thr162. Positions Ser331 to Gln451 are domain IV, binds dsDNA.

The protein belongs to the DnaA family. As to quaternary structure, oligomerizes as a right-handed, spiral filament on DNA at oriC.

The protein resides in the cytoplasm. Functionally, plays an essential role in the initiation and regulation of chromosomal replication. ATP-DnaA binds to the origin of replication (oriC) to initiate formation of the DNA replication initiation complex once per cell cycle. Binds the DnaA box (a 9 base pair repeat at the origin) and separates the double-stranded (ds)DNA. Forms a right-handed helical filament on oriC DNA; dsDNA binds to the exterior of the filament while single-stranded (ss)DNA is stabiized in the filament's interior. The ATP-DnaA-oriC complex binds and stabilizes one strand of the AT-rich DNA unwinding element (DUE), permitting loading of DNA polymerase. After initiation quickly degrades to an ADP-DnaA complex that is not apt for DNA replication. Binds acidic phospholipids. This Shouchella clausii (strain KSM-K16) (Alkalihalobacillus clausii) protein is Chromosomal replication initiator protein DnaA.